The primary structure comprises 145 residues: Putative BCoR-like protein 2 (145 aa).

Over residues 1–27 (MKEKLSKKRAEVKGNRSWLEEFLKPSD) the composition is skewed to basic and acidic residues. The segment at 1 to 58 (MKEKLSKKRAEVKGNRSWLEEFLKPSDNEEGPPPKNKVLSNNASSQKPTHSSCIPLLR) is disordered. A compositionally biased stretch (polar residues) spans 38 to 52 (VLSNNASSQKPTHSS).

The protein belongs to the BCOR family.

In Homo sapiens (Human), this protein is Putative BCoR-like protein 2 (BCORP1).